A 67-amino-acid chain; its full sequence is ATP synthase F(0) complex subunit 8 (67 aa).

The chain crosses the membrane as a helical span at residues threonine 8–phenylalanine 24. Lysine 54 carries the post-translational modification N6-acetyllysine; alternate. An N6-succinyllysine; alternate modification is found at lysine 54. The residue at position 57 (lysine 57) is an N6-acetyllysine.

It belongs to the ATPase protein 8 family. As to quaternary structure, component of the ATP synthase complex composed at least of ATP5F1A/subunit alpha, ATP5F1B/subunit beta, ATP5MC1/subunit c (homooctomer), MT-ATP6/subunit a, MT-ATP8/subunit 8, ATP5ME/subunit e, ATP5MF/subunit f, ATP5MG/subunit g, ATP5MK/subunit k, ATP5MJ/subunit j, ATP5F1C/subunit gamma, ATP5F1D/subunit delta, ATP5F1E/subunit epsilon, ATP5PF/subunit F6, ATP5PB/subunit b, ATP5PD/subunit d, ATP5PO/subunit OSCP. ATP synthase complex consists of a soluble F(1) head domain (subunits alpha(3) and beta(3)) - the catalytic core - and a membrane F(0) domain - the membrane proton channel (subunits c, a, 8, e, f, g, k and j). These two domains are linked by a central stalk (subunits gamma, delta, and epsilon) rotating inside the F1 region and a stationary peripheral stalk (subunits F6, b, d, and OSCP). Interacts with PRICKLE3.

It is found in the mitochondrion membrane. Functionally, subunit 8, of the mitochondrial membrane ATP synthase complex (F(1)F(0) ATP synthase or Complex V) that produces ATP from ADP in the presence of a proton gradient across the membrane which is generated by electron transport complexes of the respiratory chain. ATP synthase complex consist of a soluble F(1) head domain - the catalytic core - and a membrane F(1) domain - the membrane proton channel. These two domains are linked by a central stalk rotating inside the F(1) region and a stationary peripheral stalk. During catalysis, ATP synthesis in the catalytic domain of F(1) is coupled via a rotary mechanism of the central stalk subunits to proton translocation. In vivo, can only synthesize ATP although its ATP hydrolase activity can be activated artificially in vitro. Part of the complex F(0) domain. This Sus scrofa (Pig) protein is ATP synthase F(0) complex subunit 8.